A 144-amino-acid polypeptide reads, in one-letter code: Large ribosomal subunit protein uL15 (144 aa).

Residues 1–58 are disordered; it reads MRLNTLSPAAGSKPSKKRVGRGIGSGLGKTGGRGHKGQKSRSGGSVRPGFEGGQMPLK. A compositionally biased stretch (gly residues) spans 21–31; the sequence is RGIGSGLGKTG.

The protein belongs to the universal ribosomal protein uL15 family. Part of the 50S ribosomal subunit.

Binds to the 23S rRNA. This Vibrio atlanticus (strain LGP32) (Vibrio splendidus (strain Mel32)) protein is Large ribosomal subunit protein uL15.